Consider the following 178-residue polypeptide: Ribosome maturation factor RimM (178 aa).

Positions 94–174 (KNEFFWFDLI…RIDVINSFDI (81 aa)) constitute a PRC barrel domain.

It belongs to the RimM family. Binds ribosomal protein uS19.

The protein resides in the cytoplasm. An accessory protein needed during the final step in the assembly of 30S ribosomal subunit, possibly for assembly of the head region. Essential for efficient processing of 16S rRNA. May be needed both before and after RbfA during the maturation of 16S rRNA. It has affinity for free ribosomal 30S subunits but not for 70S ribosomes. This chain is Ribosome maturation factor RimM, found in Aliarcobacter butzleri (strain RM4018) (Arcobacter butzleri).